The primary structure comprises 163 residues: Phosphopantetheine adenylyltransferase (163 aa).

Thr10 serves as a coordination point for substrate. Residues 10 to 11 (TF) and His18 each bind ATP. Residues Lys42, Leu74, and Arg88 each coordinate substrate. ATP-binding positions include 89 to 91 (GLR), Glu99, and 124 to 130 (NSFISST).

This sequence belongs to the bacterial CoaD family. As to quaternary structure, homohexamer. The cofactor is Mg(2+).

The protein resides in the cytoplasm. It catalyses the reaction (R)-4'-phosphopantetheine + ATP + H(+) = 3'-dephospho-CoA + diphosphate. It participates in cofactor biosynthesis; coenzyme A biosynthesis; CoA from (R)-pantothenate: step 4/5. Functionally, reversibly transfers an adenylyl group from ATP to 4'-phosphopantetheine, yielding dephospho-CoA (dPCoA) and pyrophosphate. This Shewanella sp. (strain MR-4) protein is Phosphopantetheine adenylyltransferase.